We begin with the raw amino-acid sequence, 164 residues long: Transmembrane protein 234 (164 aa).

Helical transmembrane passes span 1–21 (MAASLGQVLALVLVAALWGGT), 82–102 (LAVPICNSLAIIFTLIVGKAL), and 112–132 (VAGMVLTVIGISLCITSSVPW).

The protein belongs to the TMEM234 family.

The protein resides in the membrane. In Homo sapiens (Human), this protein is Transmembrane protein 234 (TMEM234).